Here is a 79-residue protein sequence, read N- to C-terminus: Cell division protein ZapB (79 aa).

Positions Phe6–Glu78 form a coiled coil.

It belongs to the ZapB family. In terms of assembly, homodimer. The ends of the coiled-coil dimer bind to each other, forming polymers. Interacts with FtsZ.

The protein localises to the cytoplasm. In terms of biological role, non-essential, abundant cell division factor that is required for proper Z-ring formation. It is recruited early to the divisome by direct interaction with FtsZ, stimulating Z-ring assembly and thereby promoting cell division earlier in the cell cycle. Its recruitment to the Z-ring requires functional FtsA or ZipA. The protein is Cell division protein ZapB of Yersinia pseudotuberculosis serotype O:1b (strain IP 31758).